An 88-amino-acid polypeptide reads, in one-letter code: Putative membrane protein insertion efficiency factor (88 aa).

It belongs to the UPF0161 family.

The protein localises to the cell inner membrane. In terms of biological role, could be involved in insertion of integral membrane proteins into the membrane. This is Putative membrane protein insertion efficiency factor from Rickettsia canadensis (strain McKiel).